The sequence spans 347 residues: MSVSGSNPEYVTARVKARESALYDDEEYRKLVRMTPAEIARLMEESDYEREINALGSRYSGVDLIEYALNQNLARQFDDLLRWANGRLYDLIARYLRKFDAWNVKTVIRGIYSGTESDTVNDDLIRAGEFSDELLDTLLDAGSIEEAVERLSAAGTIYGSELESAYDDYDESGVLIPLENAVDRTYYEQLLADLTVDEATAQYREFLEAEIDFRNAQNAFRLAQSGADIDPAAYYIDGGSLFTATELATFAQNRNELIEAIRESRYGDDLSEALNQIETADSLIQFERALDNALLEYSDTLGTVHPLSVTPVVSYILAKEREVDNIRAIARGREAGLSDDEIKQEFM.

It belongs to the V-ATPase V0D/AC39 subunit family. As to quaternary structure, has multiple subunits with at least A(3), B(3), C, D, E, F, H, I and proteolipid K(x).

The protein localises to the cell membrane. Its function is as follows. Component of the A-type ATP synthase that produces ATP from ADP in the presence of a proton gradient across the membrane. This chain is A-type ATP synthase subunit C, found in Haloquadratum walsbyi (strain DSM 16790 / HBSQ001).